The sequence spans 449 residues: MAKKAVFKSLYFQVLVAIAIGVSLGHFYPETGAAMKPLGDGFIKLIKMIIAPIIFCTIVVGIAGMEDMKKVGKTGGLAVLYFEVVSTIALVIGLIVVNVWAPGVGMNVDVSTLDTKGIAKYAQPGQMQTTTDFLMNIIPTSVVDAFAKGDMLQVLFFSILFGYAMHSFGERGKPVFELIEKLSHVLFGIVGVIMKVAPIGAFGAMAYTIGKHGVGSLAQLASLMGAFYLTCVIFILGVLGSIAAFHGFSIIKLIKYIKEELFLVLGTSSSESALPRLMAKMENAGAQKSVVGLVVPTGYSFNLDGTSIYLTMAAVFIAQATNTPLDLQHQVTLLVILLLTSKGAAGVTGSGFIVLAATLSAVGTVPVAGLALILGIDRFMSEARALTNFIGNSVATLVVAKWCNALDAKRMNAVLNNETSDEAENPELVLDDAPDVIIPHVPRPIIDHH.

A run of 9 helical transmembrane segments spans residues 5 to 25 (AVFK…VSLG), 45 to 65 (LIKM…IAGM), 77 to 97 (LAVL…LIVV), 149 to 169 (GDML…HSFG), 185 to 205 (VLFG…FGAM), 231 to 251 (CVIF…FSII), 298 to 318 (GYSF…VFIA), 332 to 352 (TLLV…GSGF), and 353 to 373 (IVLA…LALI).

It belongs to the dicarboxylate/amino acid:cation symporter (DAACS) (TC 2.A.23) family.

The protein resides in the cell inner membrane. Its function is as follows. Responsible for the transport of dicarboxylates such as succinate, fumarate, and malate from the periplasm across the membrane. In Dechloromonas aromatica (strain RCB), this protein is C4-dicarboxylate transport protein.